The primary structure comprises 265 residues: Polyglutamine-binding protein 1 (265 aa).

A WW domain is found at 46–80; sequence EGLPPSWYKVFDPSCGLPYYWNADTDLVSWLSPHD. The residue at position 94 (Ser94) is a Phosphoserine. Positions 94 to 265 are disordered; the sequence is SSNADAEEKL…AEASRTKQQD (172 aa). Residues 99-175 are compositionally biased toward basic and acidic residues; the sequence is AEEKLDRSHD…DKADREEGKE (77 aa). 15 repeat units span residues 104–110, 111–117, 118–124, 125–131, 132–138, 139–140, 141–142, 143–144, 150–151, 152–153, 154–155, 156–157, 158–159, 160–161, and 162–163. Positions 104–138 are 5 X 7 AA approximate tandem repeats of D-R-[SG]-H-D-K-S; sequence DRSHDKSDRGHDKSDRSHEKLDRGHDKSDRGHDKS. The tract at residues 139 to 144 is 3 X 2 AA tandem repeats of [DE]-R; the sequence is DRDRER. The tract at residues 150-163 is 7 X 2 AA tandem repeats of [DE]-R; sequence DRERERDRERDRDR. The important for interaction with TXNL4A stretch occupies residues 245–255; the sequence is YPSPGAVLRAN. Ser247 is subject to Phosphoserine.

In terms of assembly, interacts with POU3F2/Brn-2, ATXN1, TXNL4A, HTT and AR. Interaction with ATXN1 correlates positively with the length of the polyglutamine tract. Interacts with RNA polymerase II large subunit in a phosphorylation-dependent manner. Forms a ternary complex with ATXN1 mutant and phosphorylated RNA polymerase II. Interacts (via C-terminus) with TXNL4A and CD2BP2. Interacts (via WW domain) with ATN1 and SF3B1, and may interact with additional splice factors. Interacts (via WW domain) with WBP11; Leading to reduce interaction between PQBP1 and TXNL4A. Interacts with CAPRIN1. Interacts with DDX1. Interacts with SFPQ. Interacts with KHSRP.

It is found in the nucleus. It localises to the nucleus speckle. The protein localises to the cytoplasmic granule. In terms of biological role, intrinsically disordered protein that acts as a scaffold, and which is involved in different processes, such as pre-mRNA splicing, transcription regulation, innate immunity and neuron development. Interacts with splicing-related factors via the intrinsically disordered region and regulates alternative splicing of target pre-mRNA species. May suppress the ability of POU3F2 to transactivate the DRD1 gene in a POU3F2 dependent manner. Can activate transcription directly or via association with the transcription machinery. May be involved in ATXN1 mutant-induced cell death. The interaction with ATXN1 mutant reduces levels of phosphorylated RNA polymerase II large subunit. Involved in the assembly of cytoplasmic stress granule, possibly by participating in the transport of neuronal RNA granules. Also acts as an innate immune sensor of infection by retroviruses, by detecting the presence of reverse-transcribed DNA in the cytosol. Directly binds retroviral reverse-transcribed DNA in the cytosol and interacts with CGAS, leading to activate the cGAS-STING signaling pathway, triggering type-I interferon production. The protein is Polyglutamine-binding protein 1 (PQBP1) of Gorilla gorilla gorilla (Western lowland gorilla).